The chain runs to 2641 residues: CCR4-NOT transcription complex subunit let-711 (2641 aa).

Positions 660–664 (LSELL) match the LXXLL motif. Disordered regions lie at residues 771–887 (SGRS…QNAQ), 936–963 (TQRQ…PQQQ), 1197–1221 (EGGR…PAAA), 1518–1565 (QSKI…SQGA), and 2034–2054 (GMNN…AGLQ). 3 stretches are compositionally biased toward low complexity: residues 774-795 (SSSV…QQQQ), 802-839 (LPPS…SQQQ), and 853-877 (PAQF…HMMG). Residues 951–960 (PQRPSGPPTP) are compositionally biased toward pro residues. Positions 1205–1221 (GSAQAGSASSTPTPAAA) are enriched in low complexity. Residues 2034 to 2046 (GMNNAMNNGAGNA) show a composition bias toward low complexity. The LXXLL signature appears at 2341-2345 (LRVLL). The segment at 2609–2641 (AQGSQPQAQPDGAPGPLGNNTGAANQQQNPNTN) is disordered.

Belongs to the CNOT1 family. Component of the CCR4-NOT complex at least composed of ccf-1, ccr-4 and let-711, which is required for germ cell development in hermaphrodites. Within the complex interacts with ccf-1 and ccr-4; the interactions are direct. In terms of tissue distribution, highly expressed in the germline of hermaphrodites.

Its subcellular location is the nucleus. Its function is as follows. Scaffolding component of the CCR4-NOT complex which is one of the major cellular mRNA deadenylases and is linked to various cellular processes including bulk mRNA degradation, miRNA-mediated repression, translational repression during translational initiation and general transcription regulation. Positively regulates the accumulation of the CCR4-NOT complex component ccr-1. Within the complex promotes germ cell development and fertility in hermaphrodites. Additional complex functions may be a consequence of its influence on mRNA expression. Its scaffolding function implies its interaction with the catalytic complex module and diverse RNA-binding proteins mediating the complex recruitment to selected mRNA 3'UTRs. Mediates the recruitment of the CCR4-NOT complex to miRNA targets and to the RISC complex. Acts as a transcriptional repressor. Represses the ligand-dependent transcriptional activation by nuclear receptors. In embryos, plays a role in female pronucleus and mitotic spindle positioning during the first cleavage divisions after fertilization. This may partly be through negatively regulating the accumulation of zyg-9 at the centrosome. Negatively regulates the formation of long astral microtubules in developing embryos. Required for the stabilization and degradation of maternal mRNAs such as nos-2 in somatic blastomeres. The chain is CCR4-NOT transcription complex subunit let-711 from Caenorhabditis elegans.